The sequence spans 97 residues: Large ribosomal subunit protein uL23 (97 aa).

The protein belongs to the universal ribosomal protein uL23 family. In terms of assembly, part of the 50S ribosomal subunit. Contacts protein L29, and trigger factor when it is bound to the ribosome.

Functionally, one of the early assembly proteins it binds 23S rRNA. One of the proteins that surrounds the polypeptide exit tunnel on the outside of the ribosome. Forms the main docking site for trigger factor binding to the ribosome. The sequence is that of Large ribosomal subunit protein uL23 from Sulfurihydrogenibium sp. (strain YO3AOP1).